Here is a 302-residue protein sequence, read N- to C-terminus: uncharacterized protein (302 aa).

Disordered stretches follow at residues M1–E167 and P180–S199. Residues E39–S54 show a composition bias toward basic and acidic residues. 2 stretches are compositionally biased toward polar residues: residues L123–R133 and C183–R197.

This is an uncharacterized protein from Homo sapiens (Human).